Here is a 248-residue protein sequence, read N- to C-terminus: Homeobox protein CHOX-CAD (248 aa).

Residues 137 to 196 constitute a DNA-binding region (homeobox); it reads KDKYRVVYTDHQRLELEKEFHYSRYITIRRKAELAAALGLTERQVKIWFQNRRAKERKVN. The segment at 192–248 is disordered; that stretch reads ERKVNKKKLQQQSQPTSTTTPTPPAVGTPGPMGTLCSGSAPSLVSSSPLTIKEEFMP. Composition is skewed to low complexity over residues 201–211 and 228–240; these read QQQSQPTSTTT and SGSA…SSPL.

Belongs to the Caudal homeobox family.

It localises to the nucleus. May play an important role during the early steps of organogenesis. In Gallus gallus (Chicken), this protein is Homeobox protein CHOX-CAD (CHOX-CAD1).